The chain runs to 67 residues: Large ribosomal subunit protein bL35 (67 aa).

It belongs to the bacterial ribosomal protein bL35 family.

This chain is Large ribosomal subunit protein bL35, found in Rickettsia prowazekii (strain Madrid E).